A 335-amino-acid chain; its full sequence is Ketol-acid reductoisomerase (NADP(+)) 2 (335 aa).

The KARI N-terminal Rossmann domain occupies 1–180; that stretch reads MKTYYEKDAN…GCTRAGVIET (180 aa). Residues 24 to 27, Arg-47, Ser-51, and 81 to 84 each bind NADP(+); these read YGSQ and DEQQ. Residue His-106 is part of the active site. NADP(+) is bound at residue Gly-132. Residues 181 to 326 enclose the KARI C-terminal knotted domain; that stretch reads TFQEETETDL…AELREMMSWI (146 aa). The Mg(2+) site is built by Asp-189, Glu-193, Glu-225, and Glu-229. Ser-250 contacts substrate.

The protein belongs to the ketol-acid reductoisomerase family. Mg(2+) is required as a cofactor.

It catalyses the reaction (2R)-2,3-dihydroxy-3-methylbutanoate + NADP(+) = (2S)-2-acetolactate + NADPH + H(+). It carries out the reaction (2R,3R)-2,3-dihydroxy-3-methylpentanoate + NADP(+) = (S)-2-ethyl-2-hydroxy-3-oxobutanoate + NADPH + H(+). It participates in amino-acid biosynthesis; L-isoleucine biosynthesis; L-isoleucine from 2-oxobutanoate: step 2/4. Its pathway is amino-acid biosynthesis; L-valine biosynthesis; L-valine from pyruvate: step 2/4. In terms of biological role, involved in the biosynthesis of branched-chain amino acids (BCAA). Catalyzes an alkyl-migration followed by a ketol-acid reduction of (S)-2-acetolactate (S2AL) to yield (R)-2,3-dihydroxy-isovalerate. In the isomerase reaction, S2AL is rearranged via a Mg-dependent methyl migration to produce 3-hydroxy-3-methyl-2-ketobutyrate (HMKB). In the reductase reaction, this 2-ketoacid undergoes a metal-dependent reduction by NADPH to yield (R)-2,3-dihydroxy-isovalerate. This chain is Ketol-acid reductoisomerase (NADP(+)) 2, found in Bacillus cereus (strain ATCC 10987 / NRS 248).